The sequence spans 357 residues: Meiotic driver wtf9 (357 aa).

Positions 1 to 39 (MKNKYYPLRSSMDEMSAKNDNEIDLEKGPLPEYNSEDGS) are disordered. Residues 11 to 29 (SMDEMSAKNDNEIDLEKGP) show a composition bias toward basic and acidic residues. The next 7 membrane-spanning stretches (helical) occupy residues 89–109 (LLISVLAVIVVFFTAWVCVNP), 119–139 (AFFVTIGITCPILLITIFCFF), 149–169 (CIKVTVIFLAQCVKVTVISLA), 198–218 (VVIIWLLWVVICYTLFLRSKF), 232–252 (CSISAALLLFLLYVRLPFWTL), 256–276 (FSGLFQVLGVQSCVVIVTKGL), and 286–306 (ATGYEIEASSLFVIGNFLFFY).

This sequence belongs to the WTF family. As to quaternary structure, homomer. Forms protein aggregates. The two isoforms can interact with each other and with themselves. High sequence similarity is required for their interaction.

The protein localises to the spore membrane. It is found in the vacuole membrane. Its subcellular location is the ascus epiplasm. The protein resides in the cytoplasm. It localises to the endoplasmic reticulum membrane. Its function is as follows. Promotes unequal transmission of alleles from the parental zygote to progeny spores by acting as poison/antidote system where the poison and antidote proteins are produced from the same locus; the poison component is trans-acting and targets all spores within an ascus whereas the antidote component is spore-specific, leading to poisoning of all progeny that do not inherit the allele. Functionally, localizes isoform 2 to the vacuole thereby facilitating its degradation. In terms of biological role, forms toxic aggregates that disrupt spore maturation. The protein is Meiotic driver wtf9 of Schizosaccharomyces kambucha (Fission yeast).